A 419-amino-acid chain; its full sequence is Serine hydroxymethyltransferase (419 aa).

(6S)-5,6,7,8-tetrahydrofolate contacts are provided by residues Leu122 and 126 to 128 (GHL). Position 231 is an N6-(pyridoxal phosphate)lysine (Lys231). 354–356 (SPF) provides a ligand contact to (6S)-5,6,7,8-tetrahydrofolate.

It belongs to the SHMT family. As to quaternary structure, homodimer. It depends on pyridoxal 5'-phosphate as a cofactor.

The protein resides in the cytoplasm. It carries out the reaction (6R)-5,10-methylene-5,6,7,8-tetrahydrofolate + glycine + H2O = (6S)-5,6,7,8-tetrahydrofolate + L-serine. It functions in the pathway one-carbon metabolism; tetrahydrofolate interconversion. It participates in amino-acid biosynthesis; glycine biosynthesis; glycine from L-serine: step 1/1. Functionally, catalyzes the reversible interconversion of serine and glycine with tetrahydrofolate (THF) serving as the one-carbon carrier. This reaction serves as the major source of one-carbon groups required for the biosynthesis of purines, thymidylate, methionine, and other important biomolecules. Also exhibits THF-independent aldolase activity toward beta-hydroxyamino acids, producing glycine and aldehydes, via a retro-aldol mechanism. This chain is Serine hydroxymethyltransferase, found in Exiguobacterium sibiricum (strain DSM 17290 / CCUG 55495 / CIP 109462 / JCM 13490 / 255-15).